We begin with the raw amino-acid sequence, 195 residues long: MALLFPLLAALVMTSYSPVGSLGCDLPQNHGLLSRNTLVLLHQMRRISPFLCLKDRRDFRFPQEMVKGSQLQKAHVMSVLHEMLQQIFSLFHTERSSAAWNMTLLDQLHTGLHQQLQHLETCLLQVVGEGESAGAISSPALTLRRYFQGIRVYLKEKKYSDCAWEVVRMEIMKSLFLSTNMQERLRSKDRDLGSS.

The or 23 in some molecules signal peptide spans 1–21 (MALLFPLLAALVMTSYSPVGS). Cystine bridges form between Cys24–Cys122 and Cys52–Cys162. An N-linked (GlcNAc...) asparagine glycan is attached at Asn101.

Belongs to the alpha/beta interferon family.

It is found in the secreted. The polypeptide is Interferon omega-1 (IFNW1) (Homo sapiens (Human)).